Reading from the N-terminus, the 230-residue chain is Phosphoglycerate mutase-like protein 4 (230 aa).

Residue His-21 is the Tele-phosphohistidine intermediate of the active site. Glu-96 functions as the Proton donor/acceptor in the catalytic mechanism.

Belongs to the phosphoglycerate mutase family.

May play a role in carbohydrates metabolism. The chain is Phosphoglycerate mutase-like protein 4 from Arabidopsis thaliana (Mouse-ear cress).